We begin with the raw amino-acid sequence, 115 residues long: U3-lycotoxin-Ls1d (115 aa).

A signal peptide spans 1–20; sequence MKFVLLFGVLLVTLFSYSSA. The propeptide occupies 21–44; that stretch reads EMLDDFDQADEDELLSLIEKEEAR. Disulfide bonds link cysteine 48/cysteine 63, cysteine 55/cysteine 72, cysteine 62/cysteine 87, and cysteine 74/cysteine 85.

This sequence belongs to the neurotoxin 19 (CSTX) family. 01 subfamily. As to expression, expressed by the venom gland.

Its subcellular location is the secreted. The sequence is that of U3-lycotoxin-Ls1d from Lycosa singoriensis (Wolf spider).